We begin with the raw amino-acid sequence, 420 residues long: Methanogen homoaconitase large subunit (420 aa).

[4Fe-4S] cluster-binding residues include cysteine 302, cysteine 362, and cysteine 365.

It belongs to the aconitase/IPM isomerase family. LeuC type 2 subfamily. Heterotetramer of 2 HacA and 2 HacB proteins. [4Fe-4S] cluster serves as cofactor.

The enzyme catalyses (2R)-homocitrate = (2R,3S)-homoisocitrate. The catalysed reaction is (2R)-homocitrate = cis-homoaconitate + H2O. It carries out the reaction (2R,3S)-homoisocitrate = cis-homoaconitate + H2O. It catalyses the reaction cis-(homo)2aconitate + H2O = (2R,3S)-iso(homo)2citrate. The enzyme catalyses cis-(homo)3aconitate + H2O = (2R,3S)-iso(homo)3citrate. The catalysed reaction is (R)-malate = maleate + H2O. It carries out the reaction cis-aconitate + H2O = D-threo-isocitrate. The protein operates within organic acid metabolism; 2-oxosuberate biosynthesis. In terms of biological role, component of a hydro-lyase with broad substrate specificity for cis-unsaturated tricarboxylic acids. Catalyzes both the reversible dehydration of (R)-homocitrate ((R)-2-hydroxybutane-1,2,4-tricarboxylate) to produce cis-homoaconitate ((Z)-but-1-ene-1,2,4-tricarboxylate), and its hydration to homoisocitrate ((1R,2S)-1-hydroxybutane-1,2,4-tricarboxylate). Is also able to hydrate the analogous longer chain substrates cis-homo(2)-aconitate, cis-homo(3)-aconitate, and even the non-physiological cis-homo(4)-aconitate with similar efficiency. These reactions are part of the biosynthesis pathway of coenzyme B. Can also catalyze the hydration of maleate to (R)-malate, and that of cis-aconitate. Cannot catalyze the hydration of citraconate and the dehydration of (S)-homocitrate, citramalate, 2-isopropylmalate, 3-isopropylmalate, citrate or threo-DL-isocitrate. The chain is Methanogen homoaconitase large subunit (hacA) from Methanocaldococcus jannaschii (strain ATCC 43067 / DSM 2661 / JAL-1 / JCM 10045 / NBRC 100440) (Methanococcus jannaschii).